The sequence spans 70 residues: Small ribosomal subunit protein bS21 (70 aa).

This sequence belongs to the bacterial ribosomal protein bS21 family.

The polypeptide is Small ribosomal subunit protein bS21 (Neisseria gonorrhoeae (strain ATCC 700825 / FA 1090)).